The primary structure comprises 687 residues: uncharacterized protein (687 aa).

Residues 277–295 (SVCSSQSFSSGQSDISMSS) show a composition bias toward low complexity. 3 disordered regions span residues 277–337 (SVCS…QDCD), 342–361 (DTES…SEMP), and 531–564 (HVEQ…PSLI). Residues 300-313 (NGSSVGNGSLSPMT) are compositionally biased toward polar residues.

This is an uncharacterized protein from Caenorhabditis elegans.